The chain runs to 214 residues: ATP-dependent Clp protease proteolytic subunit (214 aa).

S113 functions as the Nucleophile in the catalytic mechanism. The active site involves H138.

The protein belongs to the peptidase S14 family. In terms of assembly, fourteen ClpP subunits assemble into 2 heptameric rings which stack back to back to give a disk-like structure with a central cavity, resembling the structure of eukaryotic proteasomes.

Its subcellular location is the cytoplasm. The enzyme catalyses Hydrolysis of proteins to small peptides in the presence of ATP and magnesium. alpha-casein is the usual test substrate. In the absence of ATP, only oligopeptides shorter than five residues are hydrolyzed (such as succinyl-Leu-Tyr-|-NHMec, and Leu-Tyr-Leu-|-Tyr-Trp, in which cleavage of the -Tyr-|-Leu- and -Tyr-|-Trp bonds also occurs).. In terms of biological role, cleaves peptides in various proteins in a process that requires ATP hydrolysis. Has a chymotrypsin-like activity. Plays a major role in the degradation of misfolded proteins. The polypeptide is ATP-dependent Clp protease proteolytic subunit (Alkalilimnicola ehrlichii (strain ATCC BAA-1101 / DSM 17681 / MLHE-1)).